We begin with the raw amino-acid sequence, 607 residues long: Vacuolar fusion protein MON1 homolog (607 aa).

The segment covering 1 to 14 (MATSDSRSSPSSSD) has biased composition (low complexity). Disordered regions lie at residues 1 to 173 (MATS…DDAS) and 463 to 486 (PIDRRRRSSTTNQEQDSPGPDISV). The segment covering 21 to 55 (NPSSDPETNSERVQSQLESMNLSQPSEVSDGSHTE) has biased composition (polar residues).

It belongs to the MON1/SAND family. Interacts with CCZ1A, CCZ1B and RABF2B. As to expression, widely expressed at stable levels.

It is found in the endosome. Its subcellular location is the prevacuolar compartment. Plays an important role in membrane trafficking through the secretory apparatus. In complex with CCZ1, acts as a guanine exchange factor (GEF) for RABG3F of the Rab7 protein family. Promotes the exchange of GDP to GTP, converting RABG3F from an inactive GDP-bound form into an active GTP-bound form. The RABG3F active form is involved in protein trafficking from prevacuolar compartments (PVCs) to vacuoles. May serve as a linker between Rab5 and Rab7 protein families in PVCs and mediate PVC maturation. In Arabidopsis thaliana (Mouse-ear cress), this protein is Vacuolar fusion protein MON1 homolog.